Consider the following 257-residue polypeptide: V-type proton ATPase subunit D (257 aa).

Positions 211–233 are disordered; sequence KKKDLKAKEAQKEENSANKTIME. Basic and acidic residues predominate over residues 216-226; it reads KAKEAQKEENS.

The protein belongs to the V-ATPase D subunit family. In terms of assembly, V-ATPase is a heteromultimeric enzyme composed of a peripheral catalytic V1 complex (components A to H) attached to an integral membrane V0 proton pore complex (components: a, c, c', c'' and d).

Functionally, subunit of the peripheral V1 complex of vacuolar ATPase. Vacuolar ATPase is responsible for acidifying a variety of intracellular compartments in eukaryotic cells, thus providing most of the energy required for transport processes in the vacuolar system. This Dictyostelium discoideum (Social amoeba) protein is V-type proton ATPase subunit D (atp6v1d).